The chain runs to 312 residues: Ribosomal protein L11 methyltransferase (312 aa).

The S-adenosyl-L-methionine site is built by Thr-163, Gly-184, Asp-206, and Asn-248.

The protein belongs to the methyltransferase superfamily. PrmA family.

Its subcellular location is the cytoplasm. It carries out the reaction L-lysyl-[protein] + 3 S-adenosyl-L-methionine = N(6),N(6),N(6)-trimethyl-L-lysyl-[protein] + 3 S-adenosyl-L-homocysteine + 3 H(+). In terms of biological role, methylates ribosomal protein L11. This Clostridium botulinum (strain Hall / ATCC 3502 / NCTC 13319 / Type A) protein is Ribosomal protein L11 methyltransferase.